The primary structure comprises 258 residues: Adenylate kinase (258 aa).

G52 to T57 is an ATP binding site. Residues A72–V101 form an NMP region. AMP-binding positions include T73, R78, G99 to V101, G128 to R131, and Q135. Residues G169 to D206 form an LID region. ATP-binding positions include R170 and S179–Y180. 2 residues coordinate AMP: R203 and R214. Residue Q242 participates in ATP binding.

Belongs to the adenylate kinase family. AK2 subfamily. Monomer.

It is found in the cytoplasm. The protein localises to the cytosol. Its subcellular location is the mitochondrion intermembrane space. The catalysed reaction is AMP + ATP = 2 ADP. Its function is as follows. Catalyzes the reversible transfer of the terminal phosphate group between ATP and AMP. Plays an important role in cellular energy homeostasis and in adenine nucleotide metabolism. Adenylate kinase activity is critical for regulation of the phosphate utilization and the AMP de novo biosynthesis pathways. This chain is Adenylate kinase (adk1), found in Aspergillus niger (strain ATCC MYA-4892 / CBS 513.88 / FGSC A1513).